A 434-amino-acid chain; its full sequence is Eukaryotic translation initiation factor 3 subunit E (434 aa).

Positions 219 to 392 (FFNHPKGRDL…GHVVMGTQPL (174 aa)) constitute a PCI domain.

Belongs to the eIF-3 subunit E family. Component of the eukaryotic translation initiation factor 3 (eIF-3) complex. The eIF-3 complex interacts with pix. Interacts with mxt.

The protein resides in the cytoplasm. In terms of biological role, component of the eukaryotic translation initiation factor 3 (eIF-3) complex, which is involved in protein synthesis of a specialized repertoire of mRNAs and, together with other initiation factors, stimulates binding of mRNA and methionyl-tRNAi to the 40S ribosome. The eIF-3 complex specifically targets and initiates translation of a subset of mRNAs involved in cell proliferation. In Drosophila persimilis (Fruit fly), this protein is Eukaryotic translation initiation factor 3 subunit E (eIF3-S6).